A 40-amino-acid chain; its full sequence is Large ribosomal subunit protein bL36A (40 aa).

This sequence belongs to the bacterial ribosomal protein bL36 family.

This chain is Large ribosomal subunit protein bL36A, found in Kineococcus radiotolerans (strain ATCC BAA-149 / DSM 14245 / SRS30216).